The primary structure comprises 1132 residues: DNA-directed RNA polymerase subunit beta (1132 aa).

This sequence belongs to the RNA polymerase beta chain family. The RNAP catalytic core consists of 2 alpha, 1 beta, 1 beta' and 1 omega subunit. When a sigma factor is associated with the core the holoenzyme is formed, which can initiate transcription.

The catalysed reaction is RNA(n) + a ribonucleoside 5'-triphosphate = RNA(n+1) + diphosphate. Functionally, DNA-dependent RNA polymerase catalyzes the transcription of DNA into RNA using the four ribonucleoside triphosphates as substrates. The protein is DNA-directed RNA polymerase subunit beta of Carboxydothermus hydrogenoformans (strain ATCC BAA-161 / DSM 6008 / Z-2901).